We begin with the raw amino-acid sequence, 332 residues long: Ornithine carbamoyltransferase, catabolic (332 aa).

Residues 60–63, Gln-87, Arg-111, and 138–141 contribute to the carbamoyl phosphate site; these read STRT and HPTQ. L-ornithine is bound by residues Asn-170, Asp-230, and 234–235; that span reads SM. Residues 271 to 272 and Arg-316 contribute to the carbamoyl phosphate site; that span reads CL.

The protein belongs to the aspartate/ornithine carbamoyltransferase superfamily. OTCase family.

It is found in the cytoplasm. The catalysed reaction is carbamoyl phosphate + L-ornithine = L-citrulline + phosphate + H(+). It functions in the pathway amino-acid degradation; L-arginine degradation via ADI pathway; carbamoyl phosphate from L-arginine: step 2/2. Its function is as follows. Reversibly catalyzes the transfer of the carbamoyl group from carbamoyl phosphate (CP) to the N(epsilon) atom of ornithine (ORN) to produce L-citrulline. The polypeptide is Ornithine carbamoyltransferase, catabolic (Bacillus thuringiensis subsp. konkukian (strain 97-27)).